The primary structure comprises 2108 residues: General negative regulator of transcription subunit 1 (2108 aa).

2 coiled-coil regions span residues N795–T813 and M1021–Q1046. The segment at Q1323–G1352 is disordered. Over residues K1329–A1339 the composition is skewed to polar residues. Residues Q1340–G1352 are compositionally biased toward low complexity. T2102 is subject to Phosphothreonine.

It belongs to the CNOT1 family. As to quaternary structure, forms a NOT protein complex that comprises NOT1, NOT2, NOT3, NOT4 and NOT5. Subunit of the 1.0 MDa CCR4-NOT core complex that contains CCR4, CAF1, NOT1, NOT2, NOT3, NOT4, NOT5, CAF40 and CAF130. In the complex interacts with CCR4, POP2, NOT2, NOT4 and NOT5. The core complex probably is part of a less characterized 1.9 MDa CCR4-NOT complex.

Its subcellular location is the cytoplasm. The protein localises to the nucleus. Functionally, acts as a component of the CCR4-NOT core complex, which in the nucleus seems to be a general transcription factor, and in the cytoplasm the major mRNA deadenylase involved in mRNA turnover. The NOT protein subcomplex negatively regulates the basal and activated transcription of many genes. Preferentially affects TC-type TATA element-dependent transcription. Could directly or indirectly inhibit component(s) of the general transcription machinery. The chain is General negative regulator of transcription subunit 1 (CDC39) from Saccharomyces cerevisiae (strain ATCC 204508 / S288c) (Baker's yeast).